The primary structure comprises 567 residues: uncharacterized protein (567 aa).

This sequence belongs to the protein kinase superfamily. ADCK protein kinase family.

This is an uncharacterized protein from Synechocystis sp. (strain ATCC 27184 / PCC 6803 / Kazusa).